A 149-amino-acid polypeptide reads, in one-letter code: Nucleoside diphosphate kinase (149 aa).

Residues Lys-9, Phe-57, Arg-85, Thr-91, Arg-102, and Asn-112 each coordinate ATP. Catalysis depends on His-115, which acts as the Pros-phosphohistidine intermediate.

This sequence belongs to the NDK family. It depends on Mg(2+) as a cofactor.

It localises to the cytoplasm. It carries out the reaction a 2'-deoxyribonucleoside 5'-diphosphate + ATP = a 2'-deoxyribonucleoside 5'-triphosphate + ADP. It catalyses the reaction a ribonucleoside 5'-diphosphate + ATP = a ribonucleoside 5'-triphosphate + ADP. In terms of biological role, major role in the synthesis of nucleoside triphosphates other than ATP. The ATP gamma phosphate is transferred to the NDP beta phosphate via a ping-pong mechanism, using a phosphorylated active-site intermediate. The chain is Nucleoside diphosphate kinase from Methanosarcina barkeri (strain Fusaro / DSM 804).